Consider the following 179-residue polypeptide: Translation initiation factor IF-3 (179 aa).

It belongs to the IF-3 family. As to quaternary structure, monomer.

The protein resides in the cytoplasm. Its function is as follows. IF-3 binds to the 30S ribosomal subunit and shifts the equilibrium between 70S ribosomes and their 50S and 30S subunits in favor of the free subunits, thus enhancing the availability of 30S subunits on which protein synthesis initiation begins. This chain is Translation initiation factor IF-3, found in Proteus hauseri.